The chain runs to 193 residues: Signal peptidase I (193 aa).

At 1 to 25 the chain is on the cytoplasmic side; the sequence is MTEEQKPTSEKSVKRKSNTYWEWGK. A helical transmembrane segment spans residues 26–42; sequence AIIIAVALALLIRHFLF. Topologically, residues 43–193 are extracellular; it reads EPYLVEGSSM…FPFHDMRQTK (151 aa). Active-site residues include S51 and K93.

This sequence belongs to the peptidase S26 family.

It localises to the cell membrane. The catalysed reaction is Cleavage of hydrophobic, N-terminal signal or leader sequences from secreted and periplasmic proteins.. The polypeptide is Signal peptidase I (sipS2) (Bacillus amyloliquefaciens (Bacillus velezensis)).